A 286-amino-acid chain; its full sequence is ATP synthase gamma chain (286 aa).

Belongs to the ATPase gamma chain family. As to quaternary structure, F-type ATPases have 2 components, CF(1) - the catalytic core - and CF(0) - the membrane proton channel. CF(1) has five subunits: alpha(3), beta(3), gamma(1), delta(1), epsilon(1). CF(0) has three main subunits: a, b and c.

Its subcellular location is the cell inner membrane. Produces ATP from ADP in the presence of a proton gradient across the membrane. The gamma chain is believed to be important in regulating ATPase activity and the flow of protons through the CF(0) complex. The protein is ATP synthase gamma chain of Shewanella baltica (strain OS223).